The primary structure comprises 1051 residues: Carbamoyl phosphate synthase large chain (1051 aa).

Residues 1-399 (MKETPKKVLV…SLQKAVRMLD (399 aa)) form a carboxyphosphate synthetic domain region. R127, R167, G173, G174, K206, L208, E213, G239, V240, H241, Q282, and E296 together coordinate ATP. In terms of domain architecture, ATP-grasp 1 spans 131–325 (RETMIENNLP…LAYVSAKLAL (195 aa)). Mg(2+)-binding residues include Q282, E296, and N298. Q282, E296, and N298 together coordinate Mn(2+). The interval 400 to 548 (IGEPGVVGGK…LTYNGTEDDL (149 aa)) is oligomerization domain. A carbamoyl phosphate synthetic domain region spans residues 549–930 (EFSQGNKLLM…LKSWLSSIPN (382 aa)). The ATP-grasp 2 domain occupies 673-863 (SKLLDKLGIS…LINESMKAIF (191 aa)). ATP is bound by residues R709, K748, I750, E755, G779, V780, H781, S782, Q822, and E834. 3 residues coordinate Mg(2+): Q822, E834, and N836. Q822, E834, and N836 together coordinate Mn(2+). In terms of domain architecture, MGS-like spans 930-1051 (NRIPNKNGIA…FEISEYGGGI (122 aa)). The tract at residues 931–1051 (RIPNKNGIAL…FEISEYGGGI (121 aa)) is allosteric domain.

It belongs to the CarB family. Composed of two chains; the small (or glutamine) chain promotes the hydrolysis of glutamine to ammonia, which is used by the large (or ammonia) chain to synthesize carbamoyl phosphate. Tetramer of heterodimers (alpha,beta)4. The cofactor is Mg(2+). It depends on Mn(2+) as a cofactor.

It catalyses the reaction hydrogencarbonate + L-glutamine + 2 ATP + H2O = carbamoyl phosphate + L-glutamate + 2 ADP + phosphate + 2 H(+). The enzyme catalyses hydrogencarbonate + NH4(+) + 2 ATP = carbamoyl phosphate + 2 ADP + phosphate + 2 H(+). It participates in amino-acid biosynthesis; L-arginine biosynthesis; carbamoyl phosphate from bicarbonate: step 1/1. It functions in the pathway pyrimidine metabolism; UMP biosynthesis via de novo pathway; (S)-dihydroorotate from bicarbonate: step 1/3. Large subunit of the glutamine-dependent carbamoyl phosphate synthetase (CPSase). CPSase catalyzes the formation of carbamoyl phosphate from the ammonia moiety of glutamine, carbonate, and phosphate donated by ATP, constituting the first step of 2 biosynthetic pathways, one leading to arginine and/or urea and the other to pyrimidine nucleotides. The large subunit (synthetase) binds the substrates ammonia (free or transferred from glutamine from the small subunit), hydrogencarbonate and ATP and carries out an ATP-coupled ligase reaction, activating hydrogencarbonate by forming carboxy phosphate which reacts with ammonia to form carbamoyl phosphate. The sequence is that of Carbamoyl phosphate synthase large chain from Saccharolobus islandicus (strain M.16.4 / Kamchatka #3) (Sulfolobus islandicus).